We begin with the raw amino-acid sequence, 513 residues long: ATP synthase subunit alpha (513 aa).

An ATP-binding site is contributed by 169–176 (GDRQTGKT).

This sequence belongs to the ATPase alpha/beta chains family. In terms of assembly, F-type ATPases have 2 components, CF(1) - the catalytic core - and CF(0) - the membrane proton channel. CF(1) has five subunits: alpha(3), beta(3), gamma(1), delta(1), epsilon(1). CF(0) has three main subunits: a(1), b(2) and c(9-12). The alpha and beta chains form an alternating ring which encloses part of the gamma chain. CF(1) is attached to CF(0) by a central stalk formed by the gamma and epsilon chains, while a peripheral stalk is formed by the delta and b chains.

It is found in the cell membrane. It carries out the reaction ATP + H2O + 4 H(+)(in) = ADP + phosphate + 5 H(+)(out). Functionally, produces ATP from ADP in the presence of a proton gradient across the membrane. The alpha chain is a regulatory subunit. The sequence is that of ATP synthase subunit alpha from Polynucleobacter asymbioticus (strain DSM 18221 / CIP 109841 / QLW-P1DMWA-1) (Polynucleobacter necessarius subsp. asymbioticus).